The sequence spans 729 residues: Hydroxamate siderophore receptor FhuE (729 aa).

The first 36 residues, 1–36 (MLSTQFNRDNQYQAITKPSLLAGCIALALLPSAAFA), serve as a signal peptide directing secretion. A TonB box motif is present at residues 42 to 49 (ETVIVEGS). The tract at residues 48–72 (GSATAPDDGENDYSVTSTSAGTKMQ) is disordered. Over residues 60–72 (YSVTSTSAGTKMQ) the composition is skewed to polar residues. A TBDR plug domain is found at 74 to 183 (TQRDIPQSVT…PSAAINMVRK (110 aa)). The Fe(III)-coprogen site is built by Arg-117, Arg-142, Trp-275, Tyr-357, Asn-373, and Trp-416. The 541-residue stretch at 189 to 729 (EFKGDVSAEY…NFSITGTYQF (541 aa)) folds into the TBDR beta-barrel domain. The short motif at 712-729 (SIVYGTPRNFSITGTYQF) is the TonB C-terminal box element.

Belongs to the TonB-dependent receptor family.

Its subcellular location is the cell outer membrane. In terms of biological role, involved in the active transport across the outer membrane of iron complexed with linear hydroxamate siderophores coprogen, rhodotorulic acid and ferrioxamine B. Binds Fe-coprogen with high affinity, rhodotorulic acid to a lesser extent, and weakly to ferrioxamine B. Selective for planar siderophores. Does not use cyclic siderophores ferrichrome nor ferrioxamine E as substrates. The protein is Hydroxamate siderophore receptor FhuE of Escherichia coli (strain K12).